The sequence spans 410 residues: LL-diaminopimelate aminotransferase (410 aa).

Substrate contacts are provided by Tyr15 and Gly42. Pyridoxal 5'-phosphate contacts are provided by residues Tyr72, 108–109 (AK), Tyr132, Asn188, Tyr219, and 247–249 (SFS). Substrate is bound by residues Lys109, Tyr132, and Asn188. Lys250 is subject to N6-(pyridoxal phosphate)lysine. Residues Arg258 and Asn293 each contribute to the pyridoxal 5'-phosphate site. Residues Asn293 and Arg389 each contribute to the substrate site.

It belongs to the class-I pyridoxal-phosphate-dependent aminotransferase family. LL-diaminopimelate aminotransferase subfamily. As to quaternary structure, homodimer. Pyridoxal 5'-phosphate is required as a cofactor.

The catalysed reaction is (2S,6S)-2,6-diaminopimelate + 2-oxoglutarate = (S)-2,3,4,5-tetrahydrodipicolinate + L-glutamate + H2O + H(+). The protein operates within amino-acid biosynthesis; L-lysine biosynthesis via DAP pathway; LL-2,6-diaminopimelate from (S)-tetrahydrodipicolinate (aminotransferase route): step 1/1. In terms of biological role, involved in the synthesis of meso-diaminopimelate (m-DAP or DL-DAP), required for both lysine and peptidoglycan biosynthesis. Catalyzes the direct conversion of tetrahydrodipicolinate to LL-diaminopimelate. This Bacteroides fragilis (strain YCH46) protein is LL-diaminopimelate aminotransferase.